Reading from the N-terminus, the 513-residue chain is ATP synthase subunit alpha (513 aa).

Gly169–Thr176 contacts ATP.

The protein belongs to the ATPase alpha/beta chains family. In terms of assembly, F-type ATPases have 2 components, CF(1) - the catalytic core - and CF(0) - the membrane proton channel. CF(1) has five subunits: alpha(3), beta(3), gamma(1), delta(1), epsilon(1). CF(0) has three main subunits: a(1), b(2) and c(9-12). The alpha and beta chains form an alternating ring which encloses part of the gamma chain. CF(1) is attached to CF(0) by a central stalk formed by the gamma and epsilon chains, while a peripheral stalk is formed by the delta and b chains.

The protein localises to the cell inner membrane. The enzyme catalyses ATP + H2O + 4 H(+)(in) = ADP + phosphate + 5 H(+)(out). Functionally, produces ATP from ADP in the presence of a proton gradient across the membrane. The alpha chain is a regulatory subunit. The chain is ATP synthase subunit alpha from Shigella boydii serotype 18 (strain CDC 3083-94 / BS512).